The sequence spans 432 residues: Selenocysteine lyase (432 aa).

Met1 is subject to N-acetylmethionine. The interval 1 to 20 is disordered; that stretch reads MDVARNGARGSVESPPNRKV. Ser117 bears the Phosphoserine mark. Lys247 bears the N6-(pyridoxal phosphate)lysine mark. The S-selanylcysteine intermediate role is filled by Cys375.

This sequence belongs to the class-V pyridoxal-phosphate-dependent aminotransferase family. In terms of assembly, homodimer. It depends on pyridoxal 5'-phosphate as a cofactor.

Its subcellular location is the cytoplasm. The protein localises to the cytosol. The catalysed reaction is L-selenocysteine + AH2 = hydrogenselenide + L-alanine + A + H(+). Functionally, catalyzes the decomposition of L-selenocysteine to L-alanine and elemental selenium. The chain is Selenocysteine lyase (Scly) from Rattus norvegicus (Rat).